The sequence spans 354 residues: DNA integrity scanning protein DisA (354 aa).

The region spanning 6–144 is the DAC domain; that stretch reads DDELKKILKI…GDIKYVLRDS (139 aa). ATP contacts are provided by residues G73, L91, and 104–108; that span reads TRHRT.

Belongs to the DisA family. As to quaternary structure, homooctamer. The cofactor is Mg(2+).

The enzyme catalyses 2 ATP = 3',3'-c-di-AMP + 2 diphosphate. Participates in a DNA-damage check-point that is active prior to asymmetric division when DNA is damaged. DisA forms globular foci that rapidly scan along the chromosomes during sporulation, searching for lesions. When a lesion is present, DisA pauses at the lesion site. This triggers a cellular response that culminates in a temporary block in sporulation initiation. Functionally, also has diadenylate cyclase activity, catalyzing the condensation of 2 ATP molecules into cyclic di-AMP (c-di-AMP). c-di-AMP acts as a signaling molecule that couples DNA integrity with progression of sporulation. The rise in c-di-AMP level generated by DisA while scanning the chromosome, operates as a positive signal that advances sporulation; upon encountering a lesion, the DisA focus arrests at the damaged site and halts c-di-AMP synthesis. The polypeptide is DNA integrity scanning protein DisA (Clostridium perfringens (strain SM101 / Type A)).